Consider the following 370-residue polypeptide: Gibberellin 2-beta-dioxygenase 2 (370 aa).

A Fe2OG dioxygenase domain is found at 186-306 (DNDSLIRINH…RLSTIYFAAP (121 aa)). Tyr196 serves as a coordination point for 2-oxoglutarate. 3 residues coordinate Fe cation: His224, Asp226, and His287. Residues Arg297 and Ser299 each contribute to the 2-oxoglutarate site.

Belongs to the iron/ascorbate-dependent oxidoreductase family. GA2OX subfamily. It depends on Fe(2+) as a cofactor.

It catalyses the reaction gibberellin A1 + 2-oxoglutarate + O2 = gibberellin A8 + succinate + CO2. In terms of biological role, catalyzes the 2-beta-hydroxylation of several biologically active gibberellins, leading to the homeostatic regulation of their endogenous level. Catabolism of gibberellins (GAs) plays a central role in plant development. The sequence is that of Gibberellin 2-beta-dioxygenase 2 from Oryza sativa subsp. japonica (Rice).